A 406-amino-acid polypeptide reads, in one-letter code: Homocysteine-responsive endoplasmic reticulum-resident ubiquitin-like domain member 2 protein (406 aa).

Residues 10-89 form the Ubiquitin-like domain; sequence VTLIIKAPNQ…HMVHLVCTSR (80 aa). The tract at residues 86–154 is disordered; it reads CTSRTPPSSP…TLPQAQTDQA (69 aa). Low complexity-rich tracts occupy residues 87–98 and 106–126; these read TSRTPPSSPKSS and ALAS…PSSG. Residues 127–154 show a composition bias toward polar residues; it reads QETLSLAVGSSSEGLRQRTLPQAQTDQA. The helical transmembrane segment at 302–322 threads the bilayer; that stretch reads FIMVMGAMLLVYLHQAGWFPF.

Its subcellular location is the membrane. Functionally, could be involved in the unfolded protein response (UPR) pathway. This Homo sapiens (Human) protein is Homocysteine-responsive endoplasmic reticulum-resident ubiquitin-like domain member 2 protein (HERPUD2).